Reading from the N-terminus, the 463-residue chain is RuvB-like 2 (463 aa).

The residue at position 2 (A2) is an N-acetylalanine. A Glycyl lysine isopeptide (Lys-Gly) (interchain with G-Cter in SUMO2) cross-link involves residue K9. 77 to 84 provides a ligand contact to ATP; it reads GQPGTGKT. S437 carries the phosphoserine modification. Glycyl lysine isopeptide (Lys-Gly) (interchain with G-Cter in SUMO2) cross-links involve residues K444 and K456.

It belongs to the RuvB family. As to quaternary structure, forms homohexameric rings. Can form a dodecamer with RUVBL1 made of two stacked hexameric rings; however, even though RUVBL1 and RUVBL2 are present in equimolar ratio, the oligomeric status of each hexamer is not known. Oligomerization may regulate binding to nucleic acids and conversely, binding to nucleic acids may affect the dodecameric assembly. Interaction of the complex with DHX34 results in conformational changes of the N-terminus of the RUVBL2 subunits, resulting in loss of nucleotide binding ability and ATP hydrolysis of the complex. Interacts with the transcriptional activation domain of MYC. Interacts with ATF2. Component of the RNA polymerase II holoenzyme complex. May also act to bridge the LEF1/TCF1-CTNNB1 complex and TBP. Component of the NuA4 histone acetyltransferase complex which contains the catalytic subunit KAT5/TIP60 and the subunits EP400, TRRAP/PAF400, BRD8/SMAP, EPC1, DMAP1/DNMAP1, RUVBL1/TIP49, RUVBL2, ING3, actin, ACTL6A/BAF53A, MORF4L1/MRG15, MORF4L2/MRGX, MRGBP, YEATS4/GAS41, VPS72/YL1 and MEAF6. The NuA4 complex interacts with MYC and the adenovirus E1A protein. RUVBL2 interacts with EP400. Component of a NuA4-related complex which contains EP400, TRRAP/PAF400, SRCAP, BRD8/SMAP, EPC1, DMAP1/DNMAP1, RUVBL1/TIP49, RUVBL2, actin, ACTL6A/BAF53A, VPS72 and YEATS4/GAS41. Interacts with NPAT. Component of the chromatin-remodeling INO80 complex; specifically part of a complex module associated with the helicase ATP-binding and the helicase C-terminal domain of INO80. Component of some MLL1/MLL complex, at least composed of the core components KMT2A/MLL1, ASH2L, HCFC1/HCF1, WDR5 and RBBP5, as well as the facultative components BACC1, CHD8, E2F6, HSP70, INO80C, KANSL1, LAS1L, MAX, MCRS1, MGA, MYST1/MOF, PELP1, PHF20, PRP31, RING2, RUVB1/TIP49A, RUVB2/TIP49B, SENP3, TAF1, TAF4, TAF6, TAF7, TAF9 and TEX10. Interacts with IGHMBP2. Interacts with TELO2. Interacts with HINT1. Component of a SWR1-like complex. Component of the R2TP complex composed at least of RUVBL1, RUVBL2, RPAP3 and PIHD1. Component of the PAQosome complex which is responsible for the biogenesis of several protein complexes and which consists of R2TP complex members RUVBL1, RUVBL2, RPAP3 and PIH1D1, URI complex members PFDN2, PFDN6, PDRG1, UXT and URI1 as well as ASDURF, POLR2E and DNAAF10/WDR92. Interacts with ITFG1. Interacts with ZMYND10. Interacts with WAC; WAC positively regulates MTOR activity by promoting the assembly of the TTT complex composed of TELO2, TTI1 and TTI2 and the RUVBL complex composed of RUVBL1 and RUVBL2 into the TTT-RUVBL complex which leads to the dimerization of the mTORC1 complex and its subsequent activation. Forms a complex with APPL1 and APPL2. Interacts with ZNHIT2 (via HIT-type zinc finger) in the presence of ATP or ADP; shows a stronger interaction in the presence of ADP. The RUVBL1/RUVBL2 complex interacts with ZNHIT1 (via HIT-type zinc finger), ZNHIT3 (via HIT-type zinc finger), ZNHIT6 (via HIT-type zinc finger) and DDX59/ZNHIT5 (via HIT-type zinc finger) in the presence of ADP. Interacts with NOPCHAP1; the interaction is direct and disrupted upon ATP binding. Interacts with SMG1.

It is found in the nucleus matrix. It localises to the nucleus. The protein localises to the nucleoplasm. Its subcellular location is the cytoplasm. The protein resides in the membrane. It is found in the dynein axonemal particle. It catalyses the reaction ATP + H2O = ADP + phosphate + H(+). Functionally, possesses single-stranded DNA-stimulated ATPase and ATP-dependent DNA helicase (5' to 3') activity; hexamerization is thought to be critical for ATP hydrolysis and adjacent subunits in the ring-like structure contribute to the ATPase activity. Component of the NuA4 histone acetyltransferase complex which is involved in transcriptional activation of select genes principally by acetylation of nucleosomal histones H4 and H2A. This modification may both alter nucleosome-DNA interactions and promote interaction of the modified histones with other proteins which positively regulate transcription. This complex may be required for the activation of transcriptional programs associated with oncogene and proto-oncogene mediated growth induction, tumor suppressor mediated growth arrest and replicative senescence, apoptosis, and DNA repair. The NuA4 complex ATPase and helicase activities seem to be, at least in part, contributed by the association of RUVBL1 and RUVBL2 with EP400. NuA4 may also play a direct role in DNA repair when recruited to sites of DNA damage. Component of a SWR1-like complex that specifically mediates the removal of histone H2A.Z/H2AZ1 from the nucleosome. Proposed core component of the chromatin remodeling INO80 complex which exhibits DNA- and nucleosome-activated ATPase activity and catalyzes ATP-dependent nucleosome sliding. Plays an essential role in oncogenic transformation by MYC and also modulates transcriptional activation by the LEF1/TCF1-CTNNB1 complex. May also inhibit the transcriptional activity of ATF2. Involved in the endoplasmic reticulum (ER)-associated degradation (ERAD) pathway where it negatively regulates expression of ER stress response genes. May play a role in regulating the composition of the U5 snRNP complex. This is RuvB-like 2 (Ruvbl2) from Mus musculus (Mouse).